Consider the following 155-residue polypeptide: Small ribosomal subunit protein uS7c (155 aa).

This sequence belongs to the universal ribosomal protein uS7 family. As to quaternary structure, part of the 30S ribosomal subunit.

It is found in the plastid. Its subcellular location is the chloroplast. Its function is as follows. One of the primary rRNA binding proteins, it binds directly to 16S rRNA where it nucleates assembly of the head domain of the 30S subunit. In Houttuynia cordata (Chameleon plant), this protein is Small ribosomal subunit protein uS7c (rps7).